We begin with the raw amino-acid sequence, 336 residues long: Pyridoxal 5'-phosphate synthase subunit PdxS (336 aa).

Asp-30 contacts D-ribose 5-phosphate. Lys-87 (schiff-base intermediate with D-ribose 5-phosphate) is an active-site residue. Gly-159 serves as a coordination point for D-ribose 5-phosphate. Arg-171 contacts D-glyceraldehyde 3-phosphate. D-ribose 5-phosphate-binding positions include Gly-257 and 278–279 (GS).

This sequence belongs to the PdxS/SNZ family. As to quaternary structure, in the presence of PdxT, forms a dodecamer of heterodimers.

It carries out the reaction aldehydo-D-ribose 5-phosphate + D-glyceraldehyde 3-phosphate + L-glutamine = pyridoxal 5'-phosphate + L-glutamate + phosphate + 3 H2O + H(+). The protein operates within cofactor biosynthesis; pyridoxal 5'-phosphate biosynthesis. Functionally, catalyzes the formation of pyridoxal 5'-phosphate from ribose 5-phosphate (RBP), glyceraldehyde 3-phosphate (G3P) and ammonia. The ammonia is provided by the PdxT subunit. Can also use ribulose 5-phosphate and dihydroxyacetone phosphate as substrates, resulting from enzyme-catalyzed isomerization of RBP and G3P, respectively. In Thermoplasma volcanium (strain ATCC 51530 / DSM 4299 / JCM 9571 / NBRC 15438 / GSS1), this protein is Pyridoxal 5'-phosphate synthase subunit PdxS.